The sequence spans 287 residues: Elongation factor Ts (287 aa).

Residues 80–83 are involved in Mg(2+) ion dislocation from EF-Tu; that stretch reads TDFL.

Belongs to the EF-Ts family.

The protein resides in the cytoplasm. Its function is as follows. Associates with the EF-Tu.GDP complex and induces the exchange of GDP to GTP. It remains bound to the aminoacyl-tRNA.EF-Tu.GTP complex up to the GTP hydrolysis stage on the ribosome. The sequence is that of Elongation factor Ts from Pseudomonas savastanoi pv. phaseolicola (strain 1448A / Race 6) (Pseudomonas syringae pv. phaseolicola (strain 1448A / Race 6)).